A 440-amino-acid chain; its full sequence is 23S rRNA (uracil(1939)-C(5))-methyltransferase RlmD (440 aa).

The TRAM domain maps to 8 to 69 (PQKINKLQRE…RQFGLATTKK (62 aa)). The [4Fe-4S] cluster site is built by C82, C88, C91, and C169. Q272, F301, N306, E322, D349, and D370 together coordinate S-adenosyl-L-methionine. C396 (nucleophile) is an active-site residue.

The protein belongs to the class I-like SAM-binding methyltransferase superfamily. RNA M5U methyltransferase family. RlmD subfamily.

The catalysed reaction is uridine(1939) in 23S rRNA + S-adenosyl-L-methionine = 5-methyluridine(1939) in 23S rRNA + S-adenosyl-L-homocysteine + H(+). Catalyzes the formation of 5-methyl-uridine at position 1939 (m5U1939) in 23S rRNA. This Mannheimia succiniciproducens (strain KCTC 0769BP / MBEL55E) protein is 23S rRNA (uracil(1939)-C(5))-methyltransferase RlmD.